A 565-amino-acid polypeptide reads, in one-letter code: Periplasmic trehalase (565 aa).

An N-terminal signal peptide occupies residues 1 to 30; sequence MKSPAPSRPQKMALIPACIFLCFAALSVQA. Substrate-binding positions include arginine 152, 159-160, asparagine 196, 205-207, 277-279, and glycine 310; these read WD, RSQ, and RPE. Residues aspartate 312 and glutamate 496 each act as proton donor/acceptor in the active site. Glutamate 511 is a substrate binding site. Residues 539–565 are disordered; sequence CDNVPATRPLSESTTQPVKQKEAEPTP.

This sequence belongs to the glycosyl hydrolase 37 family. As to quaternary structure, monomer.

It localises to the periplasm. It catalyses the reaction alpha,alpha-trehalose + H2O = alpha-D-glucose + beta-D-glucose. Provides the cells with the ability to utilize trehalose at high osmolarity by splitting it into glucose molecules that can subsequently be taken up by the phosphotransferase-mediated uptake system. The chain is Periplasmic trehalase from Escherichia coli O6:H1 (strain CFT073 / ATCC 700928 / UPEC).